The sequence spans 337 residues: Pyruvate dehydrogenase E1 component subunit beta (337 aa).

E73 is a thiamine diphosphate binding site.

In terms of assembly, heterodimer of an alpha and a beta chain. The cofactor is thiamine diphosphate.

The catalysed reaction is N(6)-[(R)-lipoyl]-L-lysyl-[protein] + pyruvate + H(+) = N(6)-[(R)-S(8)-acetyldihydrolipoyl]-L-lysyl-[protein] + CO2. Its function is as follows. The pyruvate dehydrogenase complex catalyzes the overall conversion of pyruvate to acetyl-CoA and CO(2). It contains multiple copies of three enzymatic components: pyruvate dehydrogenase (E1), dihydrolipoamide acetyltransferase (E2) and lipoamide dehydrogenase (E3). This chain is Pyruvate dehydrogenase E1 component subunit beta (pdhB), found in Leifsonia xyli subsp. xyli (strain CTCB07).